Here is a 717-residue protein sequence, read N- to C-terminus: Glycine--tRNA ligase beta subunit (717 aa).

This sequence belongs to the class-II aminoacyl-tRNA synthetase family. In terms of assembly, tetramer of two alpha and two beta subunits.

Its subcellular location is the cytoplasm. It catalyses the reaction tRNA(Gly) + glycine + ATP = glycyl-tRNA(Gly) + AMP + diphosphate. This Agrobacterium fabrum (strain C58 / ATCC 33970) (Agrobacterium tumefaciens (strain C58)) protein is Glycine--tRNA ligase beta subunit.